The primary structure comprises 412 residues: Branched-chain alpha-ketoacid dehydrogenase kinase (412 aa).

The transit peptide at 1–30 (MILTSVLGSGPRSGSSLWPLLGSSLSLRVR) directs the protein to the mitochondrion. At serine 31 the chain carries Phosphoserine. Residues 159–404 (LDDHKDVVTL…DVYLRLRHID (246 aa)) form the Histidine kinase domain. Residues lysine 192 and lysine 233 each carry the N6-acetyllysine modification. Residues asparagine 279 and aspartate 315 each contribute to the ATP site. Asparagine 279 lines the Mg(2+) pocket. The K(+) site is built by valine 328, aspartate 330, and phenylalanine 333. The ATP site is built by threonine 334 and threonine 335. A phosphoserine mark is found at serine 356 and serine 360. ATP contacts are provided by histidine 364, glycine 367, and leucine 370. Glycine 367 contacts K(+).

This sequence belongs to the PDK/BCKDK protein kinase family. As to quaternary structure, homodimer. Homotetramer. Dimerizes through interaction of two opposing nucleotide-binding domains. Interacts with E2 component of the branched-chain alpha-ketoacid dehydrogenase (BCKDH) complex. Competes with BCKDK for binding to the E2 component; this interaction is modulated by branched-chain alpha-keto acids. At steady state, BCKDH holoenzyme contains BCKDK and BCKDHA is phosphorylated. In response to high levels of branched-chain alpha-keto acids, the inhibitory BCKDK is replaced by activating PPM1K leading to BCKDHA dephosphorylation and BCAA degradation. Autophosphorylated. Expressed in heart and liver.

It localises to the mitochondrion matrix. Its subcellular location is the mitochondrion. The catalysed reaction is L-seryl-[3-methyl-2-oxobutanoate dehydrogenase] + ATP = O-phospho-L-seryl-[3-methyl-2-oxobutanoate dehydrogenase] + ADP + H(+). It catalyses the reaction L-seryl-[protein] + ATP = O-phospho-L-seryl-[protein] + ADP + H(+). With respect to regulation, the ATP-ase activity is up-regulated by potassium and rubidium ions but not by sodium ions. Up-regulated in the presence of apo- or lipoylated-DBT/E2b subunit of the BCKDH complex. Functionally, serine/threonine-protein kinase component of macronutrients metabolism. Forms a functional kinase and phosphatase pair with PPM1K, serving as a metabolic regulatory node that coordinates branched-chain amino acids (BCAAs) with glucose and lipid metabolism via two distinct phosphoprotein targets: mitochondrial BCKDHA subunit of the branched-chain alpha-ketoacid dehydrogenase (BCKDH) complex and cytosolic ACLY, a lipogenic enzyme of Krebs cycle. Phosphorylates and inactivates mitochondrial BCKDH complex a multisubunit complex consisting of three multimeric components each involved in different steps of BCAA catabolism: E1 composed of BCKDHA and BCKDHB, E2 core composed of DBT monomers, and E3 composed of DLD monomers. Associates with the E2 component of BCKDH complex and phosphorylates BCKDHA on Ser-333, leading to conformational changes that interrupt substrate channeling between E1 and E2 and inactivates the BCKDH complex. phosphorylates ACLY on Ser-455 in response to changes in cellular carbohydrate abundance such as occurs during fasting to feeding metabolic transition. Refeeding stimulates MLXIPL/ChREBP transcription factor, leading to increased BCKDK to PPM1K expression ratio, phosphorylation and activation of ACLY that ultimately results in the generation of malonyl-CoA and oxaloacetate immediate substrates of de novo lipogenesis and glucogenesis, respectively. Recognizes phosphosites having SxxE/D canonical motif. The sequence is that of Branched-chain alpha-ketoacid dehydrogenase kinase (Bckdk) from Rattus norvegicus (Rat).